The chain runs to 914 residues: Zinc finger protein 717 (914 aa).

The 72-residue stretch at 22-93 (VSFEEVAVHF…EETPNLRLSA (72 aa)) folds into the KRAB domain. The segment at 209–231 (FQCNEQGKTFNTEAMFFIHKRVH) adopts a C2H2-type 1; degenerate zinc-finger fold. A C2H2-type 2; degenerate zinc finger spans residues 266-277 (RKSDFTKHQQTH). Residues 283 to 305 (YECVECEKPSISKSDLMLQCKMP) form a C2H2-type 3; degenerate zinc finger. 12 consecutive C2H2-type zinc fingers follow at residues 311-333 (YACNWCEKLFSYKSSLIIHQRIH), 339-361 (YGCNECGKTFRRKSFLTLHERTH), 367-389 (YKCIECGKTFHCKSLLTLHHRTH), 395-417 (YQCSECGKTFSQKSYLTIHHRTH), 423-445 (YACDHCEEAFSHKSRLTVHQRTH), 451-473 (YECNECGKPFINKSNLRLHQRTH), 479-501 (YECNECGKTFHRKSFLTIHQWTH), 507-529 (YECNECGKTFRCKSFLTVHQRTH), 535-557 (YACNECGKTYSHKSYLTVHHRTH), 563-585 (YECNECGKSFHCKSFLTIHQRTH), 591-613 (YECNECEKTFINKLNLGIHKRTH), and 619-641 (YECNECGKTFRQKSNLSTHQGTH). Residues 649 to 669 (CNECGKTFHRKSFLTIHQRTH) form a C2H2-type 16; degenerate zinc finger. The segment at 741–752 (QKSVLTVHHRTH) adopts a C2H2-type 17; degenerate zinc-finger fold. 5 C2H2-type zinc fingers span residues 758–780 (YECNECGKTFCHKSNLSTHQGTH), 786–808 (YECDECRKTFYDKTVLTIHQRTH), 814–836 (FECKECRKTFSQKSKLFVHHRTH), 842–864 (FRCNECRKTFSQKSGLSIHQRTH), and 870–892 (YECKECGKTFCQKSHLSRHQQTH).

The protein belongs to the krueppel C2H2-type zinc-finger protein family.

It localises to the nucleus. Its function is as follows. May be involved in transcriptional regulation. The protein is Zinc finger protein 717 of Homo sapiens (Human).